The primary structure comprises 336 residues: Phospho-N-acetylmuramoyl-pentapeptide-transferase (336 aa).

10 helical membrane-spanning segments follow: residues L3–I23, G53–I73, S78–L98, L118–I138, V143–V163, G174–A194, F200–N220, V226–A246, W251–V271, and A316–F336.

Belongs to the glycosyltransferase 4 family. MraY subfamily. Requires Mg(2+) as cofactor.

It is found in the cell membrane. It catalyses the reaction UDP-N-acetyl-alpha-D-muramoyl-L-alanyl-gamma-D-glutamyl-L-lysyl-D-alanyl-D-alanine + di-trans,octa-cis-undecaprenyl phosphate = Mur2Ac(oyl-L-Ala-gamma-D-Glu-L-Lys-D-Ala-D-Ala)-di-trans,octa-cis-undecaprenyl diphosphate + UMP. It participates in cell wall biogenesis; peptidoglycan biosynthesis. In terms of biological role, catalyzes the initial step of the lipid cycle reactions in the biosynthesis of the cell wall peptidoglycan: transfers peptidoglycan precursor phospho-MurNAc-pentapeptide from UDP-MurNAc-pentapeptide onto the lipid carrier undecaprenyl phosphate, yielding undecaprenyl-pyrophosphoryl-MurNAc-pentapeptide, known as lipid I. The protein is Phospho-N-acetylmuramoyl-pentapeptide-transferase of Streptococcus pyogenes serotype M6 (strain ATCC BAA-946 / MGAS10394).